The primary structure comprises 332 residues: MKVAVLGAGAWGTALAGHLAARHDTLLWARDAALIAGLQARHENSRYLDGIALPDALRYDAELGAALAHGAADDALCVIAAPVAGLRTLCRAMRDAGCVPAHIVWVCKGFEADTHLLPHQVIAAELPEQLSNGVLSGPSFAREVGQGLPVALTVASVSAACRDRTLAAFHHGAMRIYTGDDVIGVEVGGAVKNVLAIATGIADGLGLGLNARAALITRGLAEMSRLGAALGGRTETFTGLTGLGDLILTATGDLSRNRTVGLQLAAGRSLNDILGALGHVAEGVRCAQAVLALARAQSIEMPITEAVCGVLFDGVAPRDAVSGLLRRDARAE.

Residues Trp-11, Arg-30, and Lys-108 each coordinate NADPH. Residues Lys-108, Gly-137, and Ser-139 each coordinate sn-glycerol 3-phosphate. Residue Ala-141 coordinates NADPH. Sn-glycerol 3-phosphate-binding residues include Lys-192, Asp-245, Ser-255, Arg-256, and Asn-257. Lys-192 acts as the Proton acceptor in catalysis. Residue Arg-256 participates in NADPH binding. Val-280 and Glu-282 together coordinate NADPH.

It belongs to the NAD-dependent glycerol-3-phosphate dehydrogenase family.

It localises to the cytoplasm. The catalysed reaction is sn-glycerol 3-phosphate + NAD(+) = dihydroxyacetone phosphate + NADH + H(+). It carries out the reaction sn-glycerol 3-phosphate + NADP(+) = dihydroxyacetone phosphate + NADPH + H(+). The protein operates within membrane lipid metabolism; glycerophospholipid metabolism. Catalyzes the reduction of the glycolytic intermediate dihydroxyacetone phosphate (DHAP) to sn-glycerol 3-phosphate (G3P), the key precursor for phospholipid synthesis. The sequence is that of Glycerol-3-phosphate dehydrogenase [NAD(P)+] from Burkholderia multivorans (strain ATCC 17616 / 249).